The primary structure comprises 404 residues: Serine/threonine transporter SstT (404 aa).

Helical transmembrane passes span 10 to 30 (ILGGNLVLRIAVGLVLGICLA), 53 to 73 (AIAPILVFVLVMASIANKEVG), 81 to 101 (ILVMYVLGTFVAAVTAVILSY), 140 to 160 (AITNGNFIGILAWSIGLGIAL), 177 to 197 (AVSFVVKVVIAFAPIGVFGLV), 215 to 235 (LLAVLLGAMAIVAFILNPLLV), 287 to 307 (IAIPLGANINMAGAAITITVL), and 329 to 349 (IVASICACGASGVAGGSLLLI).

The protein belongs to the dicarboxylate/amino acid:cation symporter (DAACS) (TC 2.A.23) family.

The protein resides in the cell inner membrane. It carries out the reaction L-serine(in) + Na(+)(in) = L-serine(out) + Na(+)(out). The catalysed reaction is L-threonine(in) + Na(+)(in) = L-threonine(out) + Na(+)(out). Its function is as follows. Involved in the import of serine and threonine into the cell, with the concomitant import of sodium (symport system). This is Serine/threonine transporter SstT from Glaesserella parasuis serovar 5 (strain SH0165) (Haemophilus parasuis).